Consider the following 79-residue polypeptide: Protein FAM236C (79 aa).

The segment at 19–48 (KGPQKDPEELVAVSDTAEDPSSGTGLPREP) is disordered.

The protein belongs to the FAM236 family.

The sequence is that of Protein FAM236C from Homo sapiens (Human).